We begin with the raw amino-acid sequence, 231 residues long: Orotidine 5'-phosphate decarboxylase (231 aa).

Substrate contacts are provided by residues Asp-11, Lys-33, 60–69 (DLKFHDIPNT), Thr-120, Arg-181, Gln-190, Gly-210, and Arg-211. Catalysis depends on Lys-62, which acts as the Proton donor.

This sequence belongs to the OMP decarboxylase family. Type 1 subfamily. Homodimer.

The catalysed reaction is orotidine 5'-phosphate + H(+) = UMP + CO2. It functions in the pathway pyrimidine metabolism; UMP biosynthesis via de novo pathway; UMP from orotate: step 2/2. In terms of biological role, catalyzes the decarboxylation of orotidine 5'-monophosphate (OMP) to uridine 5'-monophosphate (UMP). The chain is Orotidine 5'-phosphate decarboxylase from Shewanella oneidensis (strain ATCC 700550 / JCM 31522 / CIP 106686 / LMG 19005 / NCIMB 14063 / MR-1).